The sequence spans 302 residues: Lactoylglutathione lyase (302 aa).

2 consecutive VOC domains span residues 11–153 and 166–301; these read KLNH…LVSQ and RFNH…VIEQ. Position 14 (H14) interacts with Zn(2+). Position 18 (R18) interacts with substrate. Zn(2+) is bound at residue E75. Residues N79, R99, and H103 each contribute to the substrate site. Positions 103 and 149 each coordinate Zn(2+). The active-site Proton donor/acceptor is E149.

The protein belongs to the glyoxalase I family. Monomer. It depends on Zn(2+) as a cofactor. Requires Cu(2+) as cofactor. The cofactor is Ni(2+). Mn(2+) is required as a cofactor.

The catalysed reaction is (R)-S-lactoylglutathione = methylglyoxal + glutathione. Its pathway is secondary metabolite metabolism; methylglyoxal degradation; (R)-lactate from methylglyoxal: step 1/2. In terms of biological role, catalyzes the conversion of hemimercaptal, formed from methylglyoxal and glutathione, to S-lactoylglutathione. The chain is Lactoylglutathione lyase (glo1) from Schizosaccharomyces pombe (strain 972 / ATCC 24843) (Fission yeast).